Here is a 259-residue protein sequence, read N- to C-terminus: Ribonuclease HII (259 aa).

An RNase H type-2 domain is found at 70 to 258; that stretch reads TLIAGIDEVG…VKSLVLGKKE (189 aa). Positions 76, 77, and 168 each coordinate a divalent metal cation.

The protein belongs to the RNase HII family. Mn(2+) serves as cofactor. Mg(2+) is required as a cofactor.

The protein localises to the cytoplasm. It catalyses the reaction Endonucleolytic cleavage to 5'-phosphomonoester.. In terms of biological role, endonuclease that specifically degrades the RNA of RNA-DNA hybrids. The polypeptide is Ribonuclease HII (Streptococcus pneumoniae (strain 70585)).